The following is a 291-amino-acid chain: Kidney mitochondrial carrier protein 1 (291 aa).

Residue Ser2 is modified to N-acetylserine. Solcar repeat units lie at residues 7–96 (KPFV…LKRL), 104–189 (ETLL…TKKH), and 198–289 (DTVS…LKKL). 6 helical membrane-spanning segments follow: residues 9–26 (FVYG…TFPI), 71–89 (GIAP…KIGT), 106–124 (LLIN…SAIA), 164–183 (GVSL…LPVY), 204–224 (FLSS…VDVV), and 264–283 (GFWP…FLTY).

The protein belongs to the mitochondrial carrier (TC 2.A.29) family. In terms of assembly, interacts with VDAC1.

The protein localises to the mitochondrion inner membrane. It catalyses the reaction sulfite(in) + sulfate(out) = sulfite(out) + sulfate(in). It carries out the reaction thiosulfate(in) + sulfate(out) = thiosulfate(out) + sulfate(in). The catalysed reaction is sulfate(out) + phosphate(in) = sulfate(in) + phosphate(out). The enzyme catalyses oxalate(in) + sulfate(out) = oxalate(out) + sulfate(in). It catalyses the reaction malonate(in) + sulfate(out) = malonate(out) + sulfate(in). It carries out the reaction maleate(in) + sulfate(out) = maleate(out) + sulfate(in). The catalysed reaction is (S)-malate(in) + sulfate(out) = (S)-malate(out) + sulfate(in). The enzyme catalyses (3S)-citramalate(in) + sulfate(out) = (3S)-citramalate(out) + sulfate(in). It catalyses the reaction (3R)-citramalate(in) + sulfate(out) = (3R)-citramalate(out) + sulfate(in). It carries out the reaction sulfate(out) + succinate(in) = sulfate(in) + succinate(out). The catalysed reaction is (S,S)-tartrate(in) + sulfate(out) = (S,S)-tartrate(out) + sulfate(in). The enzyme catalyses (2R,3R)-tartrate(in) + sulfate(out) = (2R,3R)-tartrate(out) + sulfate(in). It catalyses the reaction D-aspartate(in) + sulfate(out) = D-aspartate(out) + sulfate(in). It carries out the reaction L-aspartate(in) + sulfate(out) = L-aspartate(out) + sulfate(in). The catalysed reaction is sulfate(in) = sulfate(out). The enzyme catalyses phosphate(in) = phosphate(out). It catalyses the reaction (S)-malate(out) = (S)-malate(in). Its function is as follows. Antiporter that transports inorganic anions (sulfate, sulfite, thiosulfate and phosphate) and, to a lesser extent, a variety of dicarboxylates (e.g. malonate, malate and citramalate) and, even more so, aspartate. The sulfate/sulfate exchange is much higher than the phosphate/phosphate and malate/malate exchanges. The transport affinities is higher for sulfate and thiosulfate than for any other substrate. May catalyze the export of sulfite and thiosulfate (the hydrogen sulfide degradation products) from the mitochondria, thereby modulating the level of the hydrogen sulfide. Also may mediate a very low unidirectional transport of sulfate, phosphate and (S)-malate. This is Kidney mitochondrial carrier protein 1 from Rattus norvegicus (Rat).